An 85-amino-acid polypeptide reads, in one-letter code: uncharacterized protein (85 aa).

Residues 1 to 35 (MIEDPSKKISLWQKWINVDPKKRILFSLGLFALSA) form the signal peptide.

Its subcellular location is the secreted. This is an uncharacterized protein from Dictyostelium discoideum (Social amoeba).